The sequence spans 442 residues: tRNA(Ile)-lysidine synthase (442 aa).

30–35 serves as a coordination point for ATP; sequence SGGLDS.

This sequence belongs to the tRNA(Ile)-lysidine synthase family.

The protein localises to the cytoplasm. The catalysed reaction is cytidine(34) in tRNA(Ile2) + L-lysine + ATP = lysidine(34) in tRNA(Ile2) + AMP + diphosphate + H(+). Functionally, ligates lysine onto the cytidine present at position 34 of the AUA codon-specific tRNA(Ile) that contains the anticodon CAU, in an ATP-dependent manner. Cytidine is converted to lysidine, thus changing the amino acid specificity of the tRNA from methionine to isoleucine. This Pseudomonas fluorescens (strain Pf0-1) protein is tRNA(Ile)-lysidine synthase.